The sequence spans 199 residues: Molybdenum cofactor guanylyltransferase (199 aa).

Residues 12-14 (LAG), Lys25, Asn53, Asp71, and Asp101 each bind GTP. Asp101 lines the Mg(2+) pocket.

It belongs to the MobA family. In terms of assembly, monomer. It depends on Mg(2+) as a cofactor.

It is found in the cytoplasm. The enzyme catalyses Mo-molybdopterin + GTP + H(+) = Mo-molybdopterin guanine dinucleotide + diphosphate. Functionally, transfers a GMP moiety from GTP to Mo-molybdopterin (Mo-MPT) cofactor (Moco or molybdenum cofactor) to form Mo-molybdopterin guanine dinucleotide (Mo-MGD) cofactor. The protein is Molybdenum cofactor guanylyltransferase of Polynucleobacter asymbioticus (strain DSM 18221 / CIP 109841 / QLW-P1DMWA-1) (Polynucleobacter necessarius subsp. asymbioticus).